We begin with the raw amino-acid sequence, 511 residues long: Probable cytochrome P450 4ac2 (511 aa).

Heme-binding residues include Glu-318 and Cys-455.

Belongs to the cytochrome P450 family. It depends on heme as a cofactor.

The protein localises to the endoplasmic reticulum membrane. The protein resides in the microsome membrane. Its function is as follows. May be involved in the metabolism of insect hormones and in the breakdown of synthetic insecticides. This chain is Probable cytochrome P450 4ac2 (Cyp4ac2), found in Drosophila melanogaster (Fruit fly).